The following is a 300-amino-acid chain: Bidirectional sugar transporter SWEET12 (300 aa).

Residues 1–4 (MVQA) are Extracellular-facing. Residues 5–25 (LVFAVGIVGNILSFLVILAPV) traverse the membrane as a helical segment. Residues 8 to 92 (AVGIVGNILS…TVYLLYAPRQ (85 aa)) enclose the MtN3/slv 1 domain. The Cytoplasmic portion of the chain corresponds to 26-38 (PTFYRVYKKKSTE). A helical membrane pass occupies residues 39 to 61 (SFQSVPYAVALLSAMLWLYYALL). Residues 62 to 67 (TSDLLL) lie on the Extracellular side of the membrane. A helical transmembrane segment spans residues 68 to 88 (LSINSIGCLVESLYLTVYLLY). At 89–99 (APRQAMAFTLK) the chain is on the cytoplasmic side. The helical transmembrane segment at 100-120 (LVCAMNLALFAAVVAALQLLV) threads the bilayer. Residues 121–128 (KATDRRVT) are Extracellular-facing. A helical transmembrane segment spans residues 129–149 (LAGGIGASFALAVFVAPLTII). A MtN3/slv 2 domain is found at 131–213 (GGIGASFALA…VLYVVYKNPK (83 aa)). Over 150 to 162 (RQVIRTKSVEFMP) the chain is Cytoplasmic. The helical transmembrane segment at 163–183 (FWLSFFLTLSAVVWFFYGLLM) threads the bilayer. Residues 184-185 (KD) lie on the Extracellular side of the membrane. A helical transmembrane segment spans residues 186–206 (FFVATPNVLGLLFGLAQMVLY). Over 207 to 300 (VVYKNPKKNS…PPALPAVEVA (94 aa)) the chain is Cytoplasmic. A disordered region spans residues 256 to 300 (ADLEAAAPATPQRPADDDAIDHRSVVVDIPPPPQPPPALPAVEVA). The segment covering 269–280 (PADDDAIDHRSV) has biased composition (basic and acidic residues). Over residues 284–294 (IPPPPQPPPAL) the composition is skewed to pro residues.

This sequence belongs to the SWEET sugar transporter family. Forms homooligomers and/or heterooligomers.

It localises to the cell membrane. Its function is as follows. Mediates both low-affinity uptake and efflux of sugar across the plasma membrane. In terms of biological role, confers blight susceptibility. Confers TAL effector-mediated susceptibility to Xanthomonas oryzae pv. oryzae. The polypeptide is Bidirectional sugar transporter SWEET12 (SWEET12) (Oryza sativa subsp. japonica (Rice)).